Here is a 98-residue protein sequence, read N- to C-terminus: C-X-C motif chemokine 10 (98 aa).

The signal sequence occupies residues 1 to 21 (MNPSAAVVLCLVLLSLSGTQG). Citrulline is present on R26. Disulfide bonds link C30–C57 and C32–C74.

Belongs to the intercrine alpha (chemokine CxC) family. As to quaternary structure, monomer, dimer, and tetramer. Interacts with CXCR3 (via N-terminus). In terms of tissue distribution, in the central nervous system, CXCL10 is predominantly localized to activated neurons. Expressed in both microglia and astrocytes.

Its subcellular location is the secreted. Pro-inflammatory cytokine that is involved in a wide variety of processes such as chemotaxis, differentiation, and activation of peripheral immune cells, regulation of cell growth, apoptosis and modulation of angiostatic effects. Plays thereby an important role during viral infections by stimulating the activation and migration of immune cells to the infected sites. Mechanistically, binding of CXCL10 to the CXCR3 receptor activates G protein-mediated signaling and results in downstream activation of phospholipase C-dependent pathway, an increase in intracellular calcium production and actin reorganization. In turn, recruitment of activated Th1 lymphocytes occurs at sites of inflammation. Activation of the CXCL10/CXCR3 axis also plays an important role in neurons in response to brain injury for activating microglia, the resident macrophage population of the central nervous system, and directing them to the lesion site. This recruitment is an essential element for neuronal reorganization. The sequence is that of C-X-C motif chemokine 10 (Cxcl10) from Rattus norvegicus (Rat).